The primary structure comprises 186 residues: Elongation factor P (186 aa).

It belongs to the elongation factor P family.

The protein resides in the cytoplasm. It participates in protein biosynthesis; polypeptide chain elongation. Functionally, involved in peptide bond synthesis. Stimulates efficient translation and peptide-bond synthesis on native or reconstituted 70S ribosomes in vitro. Probably functions indirectly by altering the affinity of the ribosome for aminoacyl-tRNA, thus increasing their reactivity as acceptors for peptidyl transferase. The sequence is that of Elongation factor P from Streptococcus pneumoniae (strain Hungary19A-6).